The primary structure comprises 212 residues: Fe/S biogenesis protein NfuA (212 aa).

Residues Cys-169 and Cys-172 each coordinate [4Fe-4S] cluster.

It belongs to the NfuA family. In terms of assembly, homodimer. Requires [4Fe-4S] cluster as cofactor.

Its function is as follows. Involved in iron-sulfur cluster biogenesis. Binds a 4Fe-4S cluster, can transfer this cluster to apoproteins, and thereby intervenes in the maturation of Fe/S proteins. Could also act as a scaffold/chaperone for damaged Fe/S proteins. This Acinetobacter baylyi (strain ATCC 33305 / BD413 / ADP1) protein is Fe/S biogenesis protein NfuA.